We begin with the raw amino-acid sequence, 78 residues long: Large ribosomal subunit protein bL28 (78 aa).

The interval 1–28 (MSAYCQVTGRKPGFGKQVSHSHRHTSRR) is disordered.

Belongs to the bacterial ribosomal protein bL28 family.

In Corynebacterium urealyticum (strain ATCC 43042 / DSM 7109), this protein is Large ribosomal subunit protein bL28.